The sequence spans 130 residues: Large ribosomal subunit protein bL20c (130 aa).

This sequence belongs to the bacterial ribosomal protein bL20 family.

It is found in the plastid. The protein resides in the chloroplast. Binds directly to 23S ribosomal RNA and is necessary for the in vitro assembly process of the 50S ribosomal subunit. It is not involved in the protein synthesizing functions of that subunit. The protein is Large ribosomal subunit protein bL20c of Fagopyrum esculentum subsp. ancestrale (Wild buckwheat).